A 359-amino-acid chain; its full sequence is Mitochondrial glutathione transporter SLC25A39 (359 aa).

The Mitochondrial intermembrane portion of the chain corresponds to 1–14 (MADQDPGGISPLQQ). Solcar repeat units lie at residues 9-151 (ISPL…LKAF), 159-243 (SDLY…VKSW), and 253-347 (TSVG…GKNF). A helical transmembrane segment spans residues 15 to 35 (MVASGAGAVVTSLFMTPLDVV). The Mitochondrial matrix segment spans residues 36–121 (KVRLQSQRPS…VKIVRHEGTR (86 aa)). [2Fe-2S] cluster is bound by residues Cys74, Cys78, Cys88, and Cys94. A helical membrane pass occupies residues 122–142 (TLWSGLPATLVMTVPATAAYF). Residues 143 to 164 (TAYDQLKAFLCGRALTSDLYAP) lie on the Mitochondrial intermembrane side of the membrane. Residues 165–185 (MVAGALARLGTVTVISPLELV) traverse the membrane as a helical segment. The Mitochondrial matrix segment spans residues 186–214 (RTKLQAQHLSYRELGTCVRAAVAQGGWRS). A helical transmembrane segment spans residues 215-235 (LWLGWGPTALRDVPFSALYWF). The Mitochondrial intermembrane portion of the chain corresponds to 236–255 (NYELVKSWLSGLRPKDQTSV). The chain crosses the membrane as a helical span at residues 256–276 (GISFVAGGISGMVAATLTLPF). Residues 277-317 (DVVKTQRQVALGAVEALRVMPLNTDSTWLLLRRILAESGTR) are Mitochondrial matrix-facing. Residues 318-338 (GLFAGFLPRIIKAAPSCAIMI) form a helical membrane-spanning segment. Topologically, residues 339-359 (STYEFGKNFFQRLNREQLLSP) are mitochondrial intermembrane.

It belongs to the mitochondrial carrier (TC 2.A.29) family. Post-translationally, cleaved and degraded by AFG3L2; degradation by AFG3L2 is regulated by the ability of SLC25A39 to bind iron-sulfur. In absence of mitochondrial glutathione, SLC25A39 binds iron-sulfur, preventing cleavage and degradation by AFG3L2. The presence of mitochondrial glutathione prevents iron-sulfur-binding to SLC25A39, promoting cleavage and degradation by AFG3L2.

Its subcellular location is the mitochondrion inner membrane. The enzyme catalyses glutathione(in) = glutathione(out). With respect to regulation, the activity of SLC25A39 is regulated by levels of mitochondrial glutathione via its ability to bind [2Fe-2S] iron-sulfur cluster. Upon physiological levels of mitochondrial glutathione, glutathione prevents iron-sulfur-binding to SLC25A39 promoting cleavage and degradation by AFG3L2. Upon depletion of mitochondrial glutathione, SLC25A39 binds iron-sulfur, preventing cleavage and degradation by AFG3L2. Mitochondrial transporter required for glutathione import into mitochondria. Glutathione, which plays key roles in oxidative metabolism, is produced exclusively in the cytosol and is imported in many organelles. Mitochondrial glutathione is required for the activity and stability of proteins containing iron-sulfur clusters, as well as erythropoiesis. The sequence is that of Mitochondrial glutathione transporter SLC25A39 (SLC25A39) from Bos taurus (Bovine).